The primary structure comprises 312 residues: Ribosomal RNA small subunit methyltransferase H (312 aa).

Residues 34–36 (AGH), aspartate 54, phenylalanine 81, aspartate 102, and glutamine 109 each bind S-adenosyl-L-methionine.

The protein belongs to the methyltransferase superfamily. RsmH family.

The protein resides in the cytoplasm. The catalysed reaction is cytidine(1402) in 16S rRNA + S-adenosyl-L-methionine = N(4)-methylcytidine(1402) in 16S rRNA + S-adenosyl-L-homocysteine + H(+). Specifically methylates the N4 position of cytidine in position 1402 (C1402) of 16S rRNA. The polypeptide is Ribosomal RNA small subunit methyltransferase H (Geotalea daltonii (strain DSM 22248 / JCM 15807 / FRC-32) (Geobacter daltonii)).